We begin with the raw amino-acid sequence, 666 residues long: N-acetylgalactosaminyltransferase 6 (666 aa).

The Cytoplasmic portion of the chain corresponds to 1-11 (MRRPNLKWIVK). A helical; Signal-anchor for type II membrane protein membrane pass occupies residues 12 to 31 (ASLLLLISLTLFVLITSWIS). The Lumenal portion of the chain corresponds to 32 to 666 (STPYTNKPVH…NYSQDLVLSL (635 aa)). Residues 90 to 126 (EPVEEEVDNPHPADDEPQQQPQEELQMAAPADASVKK) are disordered. The segment covering 107-120 (QQQPQEELQMAAPA) has biased composition (low complexity). Residue N181 is glycosylated (N-linked (GlcNAc...) asparagine). Disulfide bonds link C192/C421, C412/C491, C531/C548, C577/C594, and C621/C636. The tract at residues 201–311 (LPTVSVIIIF…YNWLPPLLEP (111 aa)) is catalytic subdomain A. Substrate contacts are provided by D242 and R272. Residue N285 is glycosylated (N-linked (GlcNAc...) asparagine). Mn(2+) is bound at residue D295. Substrate is bound at residue S296. Residue H297 coordinates Mn(2+). The interval 367 to 429 (PFKSPIMAGG…PCSRIGHIYR (63 aa)) is catalytic subdomain B. W398 contacts substrate. H426 is a Mn(2+) binding site. Residue R429 coordinates substrate. One can recognise a Ricin B-type lectin domain in the interval 518 to 648 (AMGALQNVGN…DNRFQQWNFG (131 aa)). N-linked (GlcNAc...) asparagine glycosylation is found at N651 and N657.

Belongs to the glycosyltransferase 2 family. GalNAc-T subfamily. Mn(2+) serves as cofactor. As to expression, expressed during oogenesis, in the somatically derived follicle cells that surround the developing oocyte, which are involved in the maturation of the oocyte and construction of the egg shell, as well as playing a role in subsequent embryonic pattern formation. Expressed in the salivary glands from embryonic stage 12 onwards, becoming stronger at stage 13. During embryonic stages 12-13, also expressed in the posterior midgut and hindgut. During embryonic stages 14-15, expression continues in the hindgut. Expression is detected in the epidermis and antennomaxillary complex during embryonic stages 16-17. In third instar larvae, ubiquitously expressed in wing, eye-antennal, leg and haltere imaginal disks.

Its subcellular location is the golgi apparatus membrane. The catalysed reaction is L-seryl-[protein] + UDP-N-acetyl-alpha-D-galactosamine = a 3-O-[N-acetyl-alpha-D-galactosaminyl]-L-seryl-[protein] + UDP + H(+). The enzyme catalyses L-threonyl-[protein] + UDP-N-acetyl-alpha-D-galactosamine = a 3-O-[N-acetyl-alpha-D-galactosaminyl]-L-threonyl-[protein] + UDP + H(+). It functions in the pathway protein modification; protein glycosylation. Functionally, glycopeptide transferase involved in O-linked oligosaccharide biosynthesis, which catalyzes the transfer of an N-acetyl-D-galactosamine residue to an already glycosylated peptide. In contrast to other proteins of the family, it does not act as a peptide transferase that transfers GalNAc onto serine or threonine residue on the protein receptor, but instead requires the prior addition of a GalNAc on a peptide before adding additional GalNAc moieties. Some peptide transferase activity is however not excluded, considering that its appropriate peptide substrate may remain unidentified. Prefers the diglycosylated Muc5AC-3/13 as substrate. Might have a role in protein O-glycosylation in the Golgi and thereby in establishing and/or maintaining a proper secretory apparatus structure. The polypeptide is N-acetylgalactosaminyltransferase 6 (Drosophila melanogaster (Fruit fly)).